Consider the following 585-residue polypeptide: Zinc finger protein Eos (585 aa).

Disordered stretches follow at residues 1–43 (MHTP…PDFL) and 68–98 (EKEF…SANS). A compositionally biased stretch (basic and acidic residues) spans 25–34 (QGKDNLERDP). Over residues 79–98 (SVSTPNSQHSSPSRSLSANS) the composition is skewed to polar residues. Lys-100 is covalently cross-linked (Glycyl lysine isopeptide (Lys-Gly) (interchain with G-Cter in SUMO2)). A Phosphoserine modification is found at Ser-105. 4 consecutive C2H2-type zinc fingers follow at residues 159–181 (LKCD…KRSH), 187–209 (FHCN…IKLH), 215–237 (FKCP…LRTH), and 248–271 (YKCN…ERCH). Positions 281 to 585 (AQALAGQPGD…HIVRGEHKVG (305 aa)) are interaction with FOXP3. At Lys-335 the chain carries N6-acetyllysine. Positions 410–489 (PGRLELPGSR…QPPPTIVVGR (80 aa)) are disordered. The CTBP-binding motif PEDLA signature appears at 425 to 429 (PEDLA). A compositionally biased stretch (pro residues) spans 475–484 (QGPPPQPPPT). Residue Lys-500 forms a Glycyl lysine isopeptide (Lys-Gly) (interchain with G-Cter in SUMO2) linkage. 2 consecutive C2H2-type zinc fingers follow at residues 530–552 (FKCE…MGCH) and 558–582 (FECN…RGEH).

It belongs to the Ikaros C2H2-type zinc-finger protein family. As to quaternary structure, self-associates. Interacts with other family members; IKZF1, IKZF2, IKZF3 and IKZF5. Interacts with CTBP2. Interacts with SPI1, MITF, FOXP3 and CTBP1. In terms of tissue distribution, highly expressed in skeletal muscle, low levels of expression in heart, thymus, kidney, liver, and spleen. Expressed in the hematopoietic cell lines MOLT-4, NALM-6 and K-562. Highly expressed in THP-1 and M-07e cell lines, which have characteristics of myeloid and early megakaryocytic cells respectively.

Its subcellular location is the nucleus. Functionally, DNA-binding protein that binds to the 5'GGGAATRCC-3' Ikaros-binding sequence. Transcriptional repressor. Interacts with SPI1 and MITF to repress transcription of the CTSK and ACP5 promoters via recruitment of corepressors SIN3A and CTBP2. May be involved in the development of central and peripheral nervous systems. Essential for the inhibitory function of regulatory T-cells (Treg). Mediates FOXP3-mediated gene silencing in regulatory T-cells (Treg) via recruitment of corepressor CTBP1. The chain is Zinc finger protein Eos (IKZF4) from Homo sapiens (Human).